Reading from the N-terminus, the 1474-residue chain is Alpha-2-macroglobulin (1474 aa).

A signal peptide spans 1-23 (MGKNKLLHPSLVLLLLVLLPTDA). A disulfide bridge connects residues Cys48 and Cys86. Asn55, Asn70, and Asn247 each carry an N-linked (GlcNAc...) asparagine glycan. Intrachain disulfides connect Cys251–Cys299 and Cys269–Cys287. Asn396 and Asn410 each carry an N-linked (GlcNAc...) asparagine glycan. Intrachain disulfides connect Cys470–Cys563, Cys595–Cys771, Cys642–Cys689, Cys821–Cys849, Cys847–Cys883, Cys921–Cys1321, Cys1079–Cys1127, and Cys1352–Cys1467. The segment at 690 to 728 (PQLQQYEMHGPEGLRVGFYESDVMGRGHARLVHAEEPPT) is bait region. Isoglutamyl lysine isopeptide (Gln-Lys) (interchain with K-? in other proteins) cross-links involve residues Gln693 and Gln694. Inhibitory regions lie at residues 704 to 709 (RVGFYE), 719 to 723 (RLVHA), and 730 to 735 (TVRKYF). Asn869 carries N-linked (GlcNAc...) asparagine glycosylation. Positions 972 to 975 (CGEQ) form a cross-link, isoglutamyl cysteine thioester (Cys-Gln). Asn991 is a glycosylation site (N-linked (GlcNAc...) asparagine). The N-linked (GlcNAc...) asparagine glycan is linked to Asn1424.

This sequence belongs to the protease inhibitor I39 (alpha-2-macroglobulin) family. In terms of assembly, homotetramer; disulfide-linked. Plasma.

Its subcellular location is the secreted. Is able to inhibit all four classes of proteinases by a unique 'trapping' mechanism. This protein has a peptide stretch, called the 'bait region' which contains specific cleavage sites for different proteinases. When a proteinase cleaves the bait region, a conformational change is induced in the protein which traps the proteinase. The entrapped enzyme remains active against low molecular weight substrates (activity against high molecular weight substrates is greatly reduced). Following cleavage in the bait region a thioester bond is hydrolyzed and mediates the covalent binding of the protein to the proteinase. The chain is Alpha-2-macroglobulin (A2M) from Pongo abelii (Sumatran orangutan).